A 508-amino-acid polypeptide reads, in one-letter code: MSRFVQDLSKAMSQDGASQFQEVILQELELSVKKELEKILTTAASHEFEHTKKDLDGFRKLFHRFLQEKGPSVDWGKIQRPPEDSIQPYEKIKARGLPDNISSVLNKLVVVKLNGGLGTSMGCKGPKSLIGVRNENTFLDLTVQQIEHLNKTYNTDVPLVLMNSFNTDEDTKKILQKYNHCRVKIYTFNQSRYPRINKESLLPIAKDVSYSGENTEAWYPPGHGDIYASFYNSGLLDTFIEEGKEYIFVSNIDNLGATVDLYILNHLMNPPNGKRCEFVMEVTNKTRADVKGGTLTQYEGKLRLVEIAQVPKAHVDEFKSVSKFKIFNTNNLWISLGAVKRLQEQNAIDMEIIVNPKTLDGGLNVIQLETAVGAAIKSFENSLGINVPRSRFLPVKTTSDLLLVMSNLYSLNAGSLTMSEKREFPTVPLVKLGSSFTKVQDYLRRFESIPDMLELDHLTVSGDVTFGKNVSLKGTVIIIANHGDRIDIPPGAVLENKIVSGNLRILDH.

Position 13 is a phosphoserine (serine 13). UTP contacts are provided by residues 113–116 (LNGG), lysine 127, glutamine 190, and glycine 222. 115 to 116 (GG) contacts substrate. Residue lysine 127 participates in Mg(2+) binding. Substrate-binding positions include histidine 223 and 251–253 (NID). 2 residues coordinate UTP: aspartate 253 and lysine 396. A Mg(2+)-binding site is contributed by aspartate 253. Lysine 396 is a catalytic residue. Position 426 is a phosphothreonine (threonine 426). Serine 434 bears the Phosphoserine mark. An N6-acetyllysine modification is found at lysine 438. Serine 448 and serine 461 each carry phosphoserine. Residues 457 to 508 (HLTVSGDVTFGKNVSLKGTVIIIANHGDRIDIPPGAVLENKIVSGNLRILDH) form an oligomerization region. Residues 502–503 (NL) form a critical for end-to-end subunit interaction region.

The protein belongs to the UDPGP type 1 family. As to quaternary structure, homooctamer.

The protein resides in the cytoplasm. The catalysed reaction is alpha-D-glucose 1-phosphate + UTP + H(+) = UDP-alpha-D-glucose + diphosphate. It functions in the pathway glycan biosynthesis; glycogen biosynthesis. UTP--glucose-1-phosphate uridylyltransferase catalyzing the conversion of glucose-1-phosphate into UDP-glucose, a crucial precursor for the production of glycogen. In Mus musculus (Mouse), this protein is UTP--glucose-1-phosphate uridylyltransferase (Ugp2).